Consider the following 379-residue polypeptide: ORC1-type DNA replication protein 2 (379 aa).

ATP-binding positions include 69–73 (TGKTT), Tyr211, and Arg223.

Belongs to the CDC6/cdc18 family. As to quaternary structure, interacts with MCM. Autophosphorylated on a serine. Phosphorylation is inhibited by binding to MCM. Both single-stranded DNA and double-stranded DNA inhibit the phosphorylation reaction.

Involved in regulation of DNA replication. Dissociates the MCM complex and inhibits the MCM helicase activity, suggesting that it may function as a helicase loader. Binds to both specific and random double-stranded or single-stranded DNA. This chain is ORC1-type DNA replication protein 2 (cdc6-2), found in Methanothermobacter thermautotrophicus (strain ATCC 29096 / DSM 1053 / JCM 10044 / NBRC 100330 / Delta H) (Methanobacterium thermoautotrophicum).